A 573-amino-acid chain; its full sequence is Probable D-xylulose kinase A (573 aa).

The substrate site is built by His-97, Arg-168, Asp-284, and Asn-285. ATP-binding positions include Trp-366, 471–472 (GG), and Asn-475.

This sequence belongs to the FGGY kinase family.

It is found in the cytoplasm. The catalysed reaction is D-xylulose + ATP = D-xylulose 5-phosphate + ADP + H(+). Highly specific D-xylulose kinase which participates in the catabolism of xylose. Xylose is a major component of hemicelluloses such as xylan. Most fungi utilize D-xylose via three enzymatic reactions, xylose reductase (XR), xylitol dehydrogenase (XDH), and xylulokinase, to form xylulose 5-phosphate, which enters pentose phosphate pathway. In Aspergillus clavatus (strain ATCC 1007 / CBS 513.65 / DSM 816 / NCTC 3887 / NRRL 1 / QM 1276 / 107), this protein is Probable D-xylulose kinase A (xkiA).